Reading from the N-terminus, the 198-residue chain is FMN-dependent NADH:quinone oxidoreductase (198 aa).

FMN-binding positions include 92 to 95 (MWNL) and 136 to 139 (SRGG).

The protein belongs to the azoreductase type 1 family. As to quaternary structure, homodimer. FMN serves as cofactor.

The enzyme catalyses 2 a quinone + NADH + H(+) = 2 a 1,4-benzosemiquinone + NAD(+). It carries out the reaction N,N-dimethyl-1,4-phenylenediamine + anthranilate + 2 NAD(+) = 2-(4-dimethylaminophenyl)diazenylbenzoate + 2 NADH + 2 H(+). Quinone reductase that provides resistance to thiol-specific stress caused by electrophilic quinones. In terms of biological role, also exhibits azoreductase activity. Catalyzes the reductive cleavage of the azo bond in aromatic azo compounds to the corresponding amines. The chain is FMN-dependent NADH:quinone oxidoreductase from Clostridium perfringens (strain SM101 / Type A).